Reading from the N-terminus, the 119-residue chain is Phosphoribosyl-AMP cyclohydrolase (119 aa).

Aspartate 71 contributes to the Mg(2+) binding site. Cysteine 72 provides a ligand contact to Zn(2+). Positions 73 and 75 each coordinate Mg(2+). Zn(2+)-binding residues include cysteine 90 and cysteine 97.

The protein belongs to the PRA-CH family. In terms of assembly, homodimer. Requires Mg(2+) as cofactor. The cofactor is Zn(2+).

The protein resides in the cytoplasm. The catalysed reaction is 1-(5-phospho-beta-D-ribosyl)-5'-AMP + H2O = 1-(5-phospho-beta-D-ribosyl)-5-[(5-phospho-beta-D-ribosylamino)methylideneamino]imidazole-4-carboxamide. It functions in the pathway amino-acid biosynthesis; L-histidine biosynthesis; L-histidine from 5-phospho-alpha-D-ribose 1-diphosphate: step 3/9. Its function is as follows. Catalyzes the hydrolysis of the adenine ring of phosphoribosyl-AMP. The chain is Phosphoribosyl-AMP cyclohydrolase from Brucella abortus (strain 2308).